A 227-amino-acid polypeptide reads, in one-letter code: 7-cyano-7-deazaguanine synthase (227 aa).

8-18 contributes to the ATP binding site; sequence VSGGADSATVL. The Zn(2+) site is built by Cys192, Cys202, Cys205, and Cys208.

This sequence belongs to the QueC family. Requires Zn(2+) as cofactor.

It carries out the reaction 7-carboxy-7-deazaguanine + NH4(+) + ATP = 7-cyano-7-deazaguanine + ADP + phosphate + H2O + H(+). It participates in purine metabolism; 7-cyano-7-deazaguanine biosynthesis. In terms of biological role, catalyzes the ATP-dependent conversion of 7-carboxy-7-deazaguanine (CDG) to 7-cyano-7-deazaguanine (preQ(0)). This Rickettsia akari (strain Hartford) protein is 7-cyano-7-deazaguanine synthase.